The primary structure comprises 131 residues: Large ribosomal subunit protein bL19 (131 aa).

A disordered region spans residues 110–131 (KSARIAERTDDRAKKAKATAAE). Over residues 113–122 (RIAERTDDRA) the composition is skewed to basic and acidic residues.

Belongs to the bacterial ribosomal protein bL19 family.

This protein is located at the 30S-50S ribosomal subunit interface and may play a role in the structure and function of the aminoacyl-tRNA binding site. The chain is Large ribosomal subunit protein bL19 from Azorhizobium caulinodans (strain ATCC 43989 / DSM 5975 / JCM 20966 / LMG 6465 / NBRC 14845 / NCIMB 13405 / ORS 571).